Here is a 30-residue protein sequence, read N- to C-terminus: Urease subunit alpha (30 aa).

It belongs to the metallo-dependent hydrolases superfamily. Urease alpha subunit family. Heterotrimer of UreA (gamma), UreB (beta) and UreC (alpha) subunits. Three heterotrimers associate to form the active enzyme. It depends on Ni cation as a cofactor.

It localises to the cytoplasm. It catalyses the reaction urea + 2 H2O + H(+) = hydrogencarbonate + 2 NH4(+). The protein operates within nitrogen metabolism; urea degradation; CO(2) and NH(3) from urea (urease route): step 1/1. The sequence is that of Urease subunit alpha (ureC) from Escherichia coli.